A 428-amino-acid chain; its full sequence is Elongation factor 1-alpha (428 aa).

Residues 5–215 enclose the tr-type G domain; that stretch reads KPHVNIVFIG…ALDQIPEPPK (211 aa). Residues 14–21 form a G1 region; sequence GHVDHGKS. Residue 14-21 coordinates GTP; sequence GHVDHGKS. S21 serves as a coordination point for Mg(2+). The G2 stretch occupies residues 68-72; sequence GITID. The tract at residues 89 to 92 is G3; the sequence is DAPG. GTP-binding positions include 89 to 93 and 144 to 147; these read DAPGH and NKMD. A G4 region spans residues 144-147; it reads NKMD. Positions 181 to 183 are G5; it reads SAW.

Belongs to the TRAFAC class translation factor GTPase superfamily. Classic translation factor GTPase family. EF-Tu/EF-1A subfamily.

Its subcellular location is the cytoplasm. The catalysed reaction is GTP + H2O = GDP + phosphate + H(+). GTP hydrolase that promotes the GTP-dependent binding of aminoacyl-tRNA to the A-site of ribosomes during protein biosynthesis. This chain is Elongation factor 1-alpha, found in Thermococcus gammatolerans (strain DSM 15229 / JCM 11827 / EJ3).